The primary structure comprises 369 residues: Thyroid hormone receptor beta (369 aa).

The interval 1 to 14 is modulating; the sequence is MSGYIPSYLDKDEL. 8 residues coordinate Zn(2+): cysteine 15, cysteine 18, cysteine 32, cysteine 35, cysteine 53, cysteine 59, cysteine 69, and cysteine 72. 2 NR C4-type zinc fingers span residues 15-35 and 53-77; these read CVVCGDKATGYHYRCITCEGC and CKYEGKCVIDKVTRNQCQECRFKKC. Positions 15-89 form a DNA-binding region, nuclear receptor; the sequence is CVVCGDKATG…VGMATDLVLD (75 aa). Positions 125-369 constitute an NR LBD domain; sequence EEWELIKIVT…PPLFLEVFED (245 aa). 3 residues coordinate 3,3',5-triiodo-L-thyronine: arginine 190, asparagine 239, and histidine 343. Residues arginine 190, asparagine 239, and histidine 343 each contribute to the L-thyroxine site.

Belongs to the nuclear hormone receptor family. NR1 subfamily.

The protein resides in the nucleus. In terms of biological role, nuclear hormone receptor that can act as a repressor or activator of transcription. High affinity receptor for thyroid hormones, including triiodothyronine and thyroxine. In Cairina moschata (Muscovy duck), this protein is Thyroid hormone receptor beta (THRB).